A 101-amino-acid polypeptide reads, in one-letter code: ATP synthase subunit c (101 aa).

Transmembrane regions (helical) follow at residues 31–51 (AFAYLGAGLAMIGVIGVGAGQ) and 81–101 (AISETSSIYALLVALILIFVG).

The protein belongs to the ATPase C chain family. As to quaternary structure, F-type ATPases have 2 components, F(1) - the catalytic core - and F(0) - the membrane proton channel. F(1) has five subunits: alpha(3), beta(3), gamma(1), delta(1), epsilon(1). F(0) has three main subunits: a(1), b(2) and c(10-14). The alpha and beta chains form an alternating ring which encloses part of the gamma chain. F(1) is attached to F(0) by a central stalk formed by the gamma and epsilon chains, while a peripheral stalk is formed by the delta and b chains.

The protein resides in the cell membrane. Its function is as follows. F(1)F(0) ATP synthase produces ATP from ADP in the presence of a proton or sodium gradient. F-type ATPases consist of two structural domains, F(1) containing the extramembraneous catalytic core and F(0) containing the membrane proton channel, linked together by a central stalk and a peripheral stalk. During catalysis, ATP synthesis in the catalytic domain of F(1) is coupled via a rotary mechanism of the central stalk subunits to proton translocation. Key component of the F(0) channel; it plays a direct role in translocation across the membrane. A homomeric c-ring of between 10-14 subunits forms the central stalk rotor element with the F(1) delta and epsilon subunits. The polypeptide is ATP synthase subunit c (Mesomycoplasma hyopneumoniae (strain 232) (Mycoplasma hyopneumoniae)).